A 2609-amino-acid chain; its full sequence is Mycosubtilin synthase subunit C (2609 aa).

The interval 258-1628 (PREKTIHQLF…RVCAQPEMTV (1371 aa)) is domain 1 (D-serine-activating). The segment at 288–695 (TYQELNEKAN…HIPSIQESIV (408 aa)) is adenylation 1. In terms of domain architecture, Carrier 1 spans 771–845 (APRTELEKIL…ELVPYVEPVT (75 aa)). The residue at position 806 (serine 806) is an O-(pantetheine 4'-phosphoryl)serine. The epimerization 1 stretch occupies residues 853–1312 (IKGPALLTPI…EISIDELDQF (460 aa)). The segment at 1322–1623 (IENIYPLTPM…NTIPVRVCAQ (302 aa)) is condensation 1. The domain 2 (isoleucine-activating) stretch occupies residues 1778–2359 (PKEKTIYQLF…AHAIQAAALP (582 aa)). Positions 1808 to 2205 (TYRQLNEQAN…LVESVKEAVV (398 aa)) are adenylation 2. The Carrier 2 domain maps to 2282–2357 (APRTLIEKQL…TMAHAIQAAA (76 aa)). The residue at position 2317 (serine 2317) is an O-(pantetheine 4'-phosphoryl)serine. The thioesterase stretch occupies residues 2375-2581 (IPVFCFPPLI…ENMSTIRSIM (207 aa)).

Belongs to the ATP-dependent AMP-binding enzyme family. Pantetheine 4'-phosphate serves as cofactor.

Functionally, this protein is a multifunctional enzyme, able to activate and polymerize the amino acids Ser and Asn as part of the synthesis of mycosubtilin. The Ser residue is further epimerized to the D-isomer form. The activation sites for these amino acids consist of individual domains. The protein is Mycosubtilin synthase subunit C (mycC) of Bacillus subtilis.